The primary structure comprises 2640 residues: Collagen alpha-5(VI) chain (2640 aa).

The N-terminal stretch at 1-18 (MKLRLIAFVLILWTETLA) is a signal peptide. The tract at residues 19 to 1426 (DQSPGPGPEY…ACCCTFCKCP (1408 aa)) is nonhelical region. VWFA domains are found at residues 30–209 (DVVF…IKDV), 268–445 (DLIF…LKKI), 474–644 (DIYF…KNEI), 660–829 (DIMF…ESKL), 846–1023 (DIVF…QETL), 1037–1214 (DVIF…VREI), and 1226–1413 (DVVV…LGNI). N-linked (GlcNAc...) asparagine glycosylation is found at asparagine 201, asparagine 292, and asparagine 614. Collagen-like domains follow at residues 1426–1478 (PGIP…GCPG), 1474–1524 (VGCP…DPGN), 1557–1614 (GQKG…GPEG), 1632–1689 (GSQG…GIPG), and 1706–1762 (GDPG…AGQP). The interval 1427 to 1760 (GIPGPHGTRG…GRRGPKGTAG (334 aa)) is triple-helical region. A disordered region spans residues 1435–1761 (RGLQASKGSS…RRGPKGTAGQ (327 aa)). The span at 1452 to 1464 (HRGEDGDPGRRGE) shows a compositional bias: basic and acidic residues. Basic and acidic residues predominate over residues 1537–1567 (DGEKGFPGDPGDPGKDSNIKGQKGEKGERGR). The span at 1597 to 1609 (PSGQAGNPGPQGT) shows a compositional bias: polar residues. Residues 1610–1622 (QGPEGLQGSQGSS) show a composition bias toward low complexity. The short motif at 1649–1651 (RGD) is the Cell attachment site element. Residues 1718–1727 (GIPGGPGPKG) show a composition bias toward gly residues. Residues 1740–1750 (RSGLQGSQGPP) are compositionally biased toward low complexity. Residues 1761 to 2640 (QPIYSPCELI…NSKQDGEDAR (880 aa)) are nonhelical region. 2 consecutive VWFA domains span residues 1790–1970 (ELVF…KLRR) and 1996–2186 (DVAF…VKFL). Short sequence motifs (cell attachment site) lie at residues 2216-2218 (RGD) and 2259-2261 (RGD). In terms of domain architecture, VWFA 10 spans 2321–2516 (DVAFLIDASQ…PDLDYVIKFI (196 aa)). The N-linked (GlcNAc...) asparagine glycan is linked to asparagine 2541. A disordered region spans residues 2617–2640 (DKEEPCSAETPAPVNSKQDGEDAR).

This sequence belongs to the type VI collagen family. Trimers composed of three different chains: alpha-1(VI), alpha-2(VI), and alpha-3(VI) or alpha-4(VI) or alpha-5(VI) or alpha-6(VI). Post-translationally, prolines at the third position of the tripeptide repeating unit (G-X-Y) are hydroxylated in some or all of the chains. In newborn, it is expressed in lung, heart, kidney, muscle, brain, intestine, skin, femur, sternum and calvaria. In adult, it is widely expressed and is detected in lung, heart, kidney, spleen, muscle, ovary, uterus, brain, skin, liver and sternum.

It is found in the secreted. It localises to the extracellular space. Its subcellular location is the extracellular matrix. Its function is as follows. Collagen VI acts as a cell-binding protein. This is Collagen alpha-5(VI) chain (Col6a5) from Mus musculus (Mouse).